The primary structure comprises 276 residues: Formamidopyrimidine-DNA glycosylase (276 aa).

The active-site Schiff-base intermediate with DNA is the Pro-2. Catalysis depends on Glu-3, which acts as the Proton donor. Lys-58 functions as the Proton donor; for beta-elimination activity in the catalytic mechanism. Residues His-94, Arg-112, and Arg-157 each contribute to the DNA site. The FPG-type zinc-finger motif lies at 242-276 (FVYDRAGEPCRVCGAPIRQIVQGQRSTYYCPNCQR). Arg-266 (proton donor; for delta-elimination activity) is an active-site residue.

Belongs to the FPG family. Monomer. The cofactor is Zn(2+).

It carries out the reaction Hydrolysis of DNA containing ring-opened 7-methylguanine residues, releasing 2,6-diamino-4-hydroxy-5-(N-methyl)formamidopyrimidine.. The catalysed reaction is 2'-deoxyribonucleotide-(2'-deoxyribose 5'-phosphate)-2'-deoxyribonucleotide-DNA = a 3'-end 2'-deoxyribonucleotide-(2,3-dehydro-2,3-deoxyribose 5'-phosphate)-DNA + a 5'-end 5'-phospho-2'-deoxyribonucleoside-DNA + H(+). Its function is as follows. Involved in base excision repair of DNA damaged by oxidation or by mutagenic agents. Acts as a DNA glycosylase that recognizes and removes damaged bases. Has a preference for oxidized purines, such as 7,8-dihydro-8-oxoguanine (8-oxoG). Has AP (apurinic/apyrimidinic) lyase activity and introduces nicks in the DNA strand. Cleaves the DNA backbone by beta-delta elimination to generate a single-strand break at the site of the removed base with both 3'- and 5'-phosphates. The polypeptide is Formamidopyrimidine-DNA glycosylase (Burkholderia thailandensis (strain ATCC 700388 / DSM 13276 / CCUG 48851 / CIP 106301 / E264)).